The primary structure comprises 543 residues: Headcase protein homolog (543 aa).

Disordered regions lie at residues M1–G26 and M197–A283. Basic and acidic residues-rich tracts occupy residues M197–T211 and P235–S250. S264 and S268 each carry phosphoserine.

In terms of tissue distribution, expressed in all tissues examined. Highest levels are in the spleen, thymus, peripheral blood and heart. Lowest in the kidney and pancreas.

May play an important role in some human cancers. May be part of the regulatory mechanism in the development of epithelial tube networks such as the circulatory system and lungs. The chain is Headcase protein homolog (HECA) from Homo sapiens (Human).